Here is a 351-residue protein sequence, read N- to C-terminus: Outer membrane porin protein 32 (351 aa).

The N-terminal stretch at 1 to 19 (MKKSLIALAVLAASGAAMA) is a signal peptide. Pyrrolidone carboxylic acid is present on glutamine 20.

To bacterial outer membrane proteins and porins. In terms of assembly, homotrimer.

It localises to the cell outer membrane. Functionally, forms anion selective channels. This Delftia acidovorans (Pseudomonas acidovorans) protein is Outer membrane porin protein 32 (omp32).